We begin with the raw amino-acid sequence, 463 residues long: GTPase Der (463 aa).

EngA-type G domains lie at 27–190 (PVVA…PEVG) and 200–373 (RRVA…ASWD). Residues 33–40 (GRPNVGKS), 80–84 (DTGGW), 142–145 (NKVD), 206–213 (GKPNVGKS), 253–257 (DTAGL), and 318–321 (NKWD) each bind GTP. The KH-like domain maps to 374–456 (TRIATGPLNT…PIRVNVRVRE (83 aa)).

It belongs to the TRAFAC class TrmE-Era-EngA-EngB-Septin-like GTPase superfamily. EngA (Der) GTPase family. In terms of assembly, associates with the 50S ribosomal subunit.

Functionally, GTPase that plays an essential role in the late steps of ribosome biogenesis. The polypeptide is GTPase Der (Mycobacterium bovis (strain ATCC BAA-935 / AF2122/97)).